The primary structure comprises 161 residues: Regulator of ribonuclease activity A (161 aa).

Belongs to the RraA family. As to quaternary structure, homotrimer. Binds to both RNA-binding sites in the C-terminal region of Rne and to RhlB.

It localises to the cytoplasm. Its function is as follows. Globally modulates RNA abundance by binding to RNase E (Rne) and regulating its endonucleolytic activity. Can modulate Rne action in a substrate-dependent manner by altering the composition of the degradosome. Modulates RNA-binding and helicase activities of the degradosome. In Yersinia pseudotuberculosis serotype O:1b (strain IP 31758), this protein is Regulator of ribonuclease activity A.